The primary structure comprises 159 residues: Odorant-binding protein (159 aa).

Belongs to the calycin superfamily. Lipocalin family. In terms of assembly, homodimer.

The protein resides in the secreted. Its function is as follows. This protein binds a wide variety of chemical odorants. The sequence is that of Odorant-binding protein from Bos taurus (Bovine).